The chain runs to 102 residues: UPF0213 protein XAC3202 (102 aa).

Positions 5–80 (KPWHLYLLLC…KRLPRARKLA (76 aa)) constitute a GIY-YIG domain.

The protein belongs to the UPF0213 family.

This chain is UPF0213 protein XAC3202, found in Xanthomonas axonopodis pv. citri (strain 306).